Consider the following 499-residue polypeptide: Cobyric acid synthase (499 aa).

Residues 251-442 (SLDIAVVSLK…LHGVFDNLEW (192 aa)) form the GATase cobBQ-type domain. Cys332 functions as the Nucleophile in the catalytic mechanism. His434 is an active-site residue.

Belongs to the CobB/CobQ family. CobQ subfamily.

It functions in the pathway cofactor biosynthesis; adenosylcobalamin biosynthesis. Functionally, catalyzes amidations at positions B, D, E, and G on adenosylcobyrinic A,C-diamide. NH(2) groups are provided by glutamine, and one molecule of ATP is hydrogenolyzed for each amidation. The polypeptide is Cobyric acid synthase (Streptococcus sanguinis (strain SK36)).